The primary structure comprises 214 residues: S-crystallin 1 (214 aa).

The region spanning 2-79 is the GST N-terminal domain; that stretch reads PSYTLHYFNH…YLAREFGFHG (78 aa). One can recognise a GST C-terminal domain in the interval 81 to 214; that stretch reads NNMEMARVDF…YLQRRCRTDF (134 aa).

The protein belongs to the GST superfamily. Lens.

Its function is as follows. S-crystallins are structural components of squids and octopi eye lens. Contains relatively little GST activity (1/1000 of that of mammalian GST enzyme). This Octopus vulgaris (Common octopus) protein is S-crystallin 1 (OCTS1).